The chain runs to 123 residues: Sperm-associated antigen 11A (123 aa).

The signal sequence occupies residues 1-25 (MRQRLLPSVTSLLLVALLFPGSSQA). Residue asparagine 29 is glycosylated (N-linked (GlcNAc...) asparagine).

This sequence belongs to the SPAG11 family.

It localises to the secreted. Has antimicrobial activity against E.coli. Plays a role in the defense response in the male reproductive tract, contributing to sperm maturation, storage and protection. The chain is Sperm-associated antigen 11A from Homo sapiens (Human).